The primary structure comprises 221 residues: Probable glutathione S-transferase (221 aa).

Positions 4 to 83 constitute a GST N-terminal domain; that stretch reads EEVILLDFWP…YIEEVWKDKA (80 aa). Residues serine 14, lysine 41, isoleucine 55, and 67–68 contribute to the glutathione site; that span reads ES. One can recognise a GST C-terminal domain in the interval 90–214; sequence DPYDRAQARF…PKVLEFVKVL (125 aa).

The protein belongs to the GST superfamily. HSP26 family. As to expression, root tip-specific expression.

It carries out the reaction RX + glutathione = an S-substituted glutathione + a halide anion + H(+). The protein is Probable glutathione S-transferase of Nicotiana tabacum (Common tobacco).